The following is a 424-amino-acid chain: Glutamyl-tRNA reductase (424 aa).

Residues 51–54 (TCNR), S99, 104–106 (EDQ), and Q110 each bind substrate. C52 acts as the Nucleophile in catalysis. 179 to 184 (GTGEMG) is a binding site for NADP(+).

Belongs to the glutamyl-tRNA reductase family. Homodimer.

It carries out the reaction (S)-4-amino-5-oxopentanoate + tRNA(Glu) + NADP(+) = L-glutamyl-tRNA(Glu) + NADPH + H(+). It functions in the pathway porphyrin-containing compound metabolism; protoporphyrin-IX biosynthesis; 5-aminolevulinate from L-glutamyl-tRNA(Glu): step 1/2. In terms of biological role, catalyzes the NADPH-dependent reduction of glutamyl-tRNA(Glu) to glutamate 1-semialdehyde (GSA). The protein is Glutamyl-tRNA reductase of Methanospirillum hungatei JF-1 (strain ATCC 27890 / DSM 864 / NBRC 100397 / JF-1).